We begin with the raw amino-acid sequence, 591 residues long: MLILNGFSSATLALITPPSLPKGGKALSQSGPDGLASITLPLPISAERGFAPALALHYSSGGGNGPFGVGWSCATMSIARSTSHGVPQYNDSDEFLGPDGEVLVQTLSTGDAPNPVTCFAYGDVSFPQSYTVTRYQPRTESSFYRLEYWVGNSNGDDFWLLHDSNGILHLLGKTAAARLSDPQAASHTAQWLVEESVTPAGEHIYYSYLAENGDNVDLNGNEAGRDRSAMRYLSKVQYGNATPAADLYLWTSATPAVQWLFTLVFDYGERGVDPQVPPAFTAQNSWLARQDPFSLYNYGFEIRLHRLCRQVLMFHHFPDELGEADTLVSRLLLEYDENPILTQLCAARTLAYEGDGYRRAPVNNIMPPPPPPPMMGGNSSRPKSKWAIVEESKQIQALRYYSAQGYSVINKYLRGDDYPETQAKETLLSRDYLSTNEPSDEEFKNAMSVYINDIAEGLSSLPETDHRVVYRGLKLDKPALSDVLKEYTTIGNIIIDKAFMSTSPDKAWINDTILNIYLEKGHKGRILGDVAHFKGEAEMLFPPNTKLKIESIVNCGSQDFASQLSKLRLSDDATADTNRIKRIINMRVLNS.

In terms of domain architecture, TR mART core spans 373-576 (PMMGGNSSRP…LRLSDDATAD (204 aa)). Residues R471, S501, and E538 contribute to the active site.

Belongs to the SpvB family.

The protein localises to the secreted. It carries out the reaction L-arginyl-[protein] + NAD(+) = N(omega)-(ADP-D-ribosyl)-L-arginyl-[protein] + nicotinamide + H(+). Mono-ADP-ribosylates eukaryotic muscle and non-muscle actin on 'Arg-177'. ADP-ribosylation prevents the polymerization of G-actin to F-actin, causing actin filament depolymerization, destruction of the cytoskeleton and cytotoxicity. Does not possess NAD(+)-glycohydrolase activity, unlike most mART enzymes. The sequence is that of Mono(ADP-ribosyl)transferase SpvB (spvB) from Salmonella choleraesuis (strain SC-B67).